A 61-amino-acid polypeptide reads, in one-letter code: MRWLCRLIGYRYGYAVCGGYRRQGGRCSAQLHAQYTRVSHCVLRIAWEVNGADYELFRLWI.

This is an uncharacterized protein from Treponema pallidum (strain Nichols).